We begin with the raw amino-acid sequence, 184 residues long: Large ribosomal subunit protein uL6 (184 aa).

It belongs to the universal ribosomal protein uL6 family. As to quaternary structure, part of the 50S ribosomal subunit.

This protein binds to the 23S rRNA, and is important in its secondary structure. It is located near the subunit interface in the base of the L7/L12 stalk, and near the tRNA binding site of the peptidyltransferase center. The chain is Large ribosomal subunit protein uL6 from Thermococcus onnurineus (strain NA1).